We begin with the raw amino-acid sequence, 144 residues long: Large ribosomal subunit protein uL16 (144 aa).

This sequence belongs to the universal ribosomal protein uL16 family. Part of the 50S ribosomal subunit.

In terms of biological role, binds 23S rRNA and is also seen to make contacts with the A and possibly P site tRNAs. The chain is Large ribosomal subunit protein uL16 from Bacillus cytotoxicus (strain DSM 22905 / CIP 110041 / 391-98 / NVH 391-98).